Consider the following 529-residue polypeptide: Bifunctional purine biosynthesis protein PurH (529 aa).

The MGS-like domain occupies 1-148 (MEQSFLPIRC…KNYKYVTVVV (148 aa)).

It belongs to the PurH family.

It catalyses the reaction (6R)-10-formyltetrahydrofolate + 5-amino-1-(5-phospho-beta-D-ribosyl)imidazole-4-carboxamide = 5-formamido-1-(5-phospho-D-ribosyl)imidazole-4-carboxamide + (6S)-5,6,7,8-tetrahydrofolate. The enzyme catalyses IMP + H2O = 5-formamido-1-(5-phospho-D-ribosyl)imidazole-4-carboxamide. Its pathway is purine metabolism; IMP biosynthesis via de novo pathway; 5-formamido-1-(5-phospho-D-ribosyl)imidazole-4-carboxamide from 5-amino-1-(5-phospho-D-ribosyl)imidazole-4-carboxamide (10-formyl THF route): step 1/1. It participates in purine metabolism; IMP biosynthesis via de novo pathway; IMP from 5-formamido-1-(5-phospho-D-ribosyl)imidazole-4-carboxamide: step 1/1. This chain is Bifunctional purine biosynthesis protein PurH, found in Wigglesworthia glossinidia brevipalpis.